The primary structure comprises 436 residues: UPF0597 protein YhaM (436 aa).

It belongs to the UPF0597 family.

This chain is UPF0597 protein YhaM, found in Escherichia coli (strain SE11).